Consider the following 232-residue polypeptide: Replicative helicase loading/DNA remodeling protein DnaD (232 aa).

Positions 1 to 98 (MKKQQFIDMQ…QNGIKFEKYS (98 aa)) are N-terminal domain. A DDBH1 region spans residues 1–116 (MKKQQFIDMQ…YEYIQLAQNQ (116 aa)). The interval 99 to 205 (LQPLWGKLYE…VEQAKIHSQK (107 aa)) is C-terminal domain. The tract at residues 131-200 (TIFEEEFARP…NGLKTVEQAK (70 aa)) is DDBH2. Residues 206–232 (FRRVQAKQNEPQKEYKRQVPFYNWLEQ) are C-terminal tail.

Belongs to the DnaB/DnaD family. In terms of assembly, the DNA replisome assembles sequentially on oriC in this order; DnaA, DnaD, DnaB, DnaI-DnaC helicase. Homodimer. Homotetramer. Oligomerization in vitro is concentration dependent. Part of the replication restart primosome which assembles in this order; PriA, DnaD then DnaB. The preferred DNA substrate mimics an arrested DNA replication fork with unreplicated lagging strand. Interacts with DnaA, DnaB and PriA. Interaction with DnaB requires DnaD to dimerize.

Its subcellular location is the cytoplasm. With respect to regulation, recruitment to oriC requires DnaA but not DnaB, DnaC or DnaI and is blocked by SirA. Functionally, required to load replicative helicase DnaC onto replication forks. Binds to a DnaD recognition element (DRE) which has pairs of 5'-TnnT-3' motifs; there is a strong DRE at oriC opposite the DnaA-trios recognized by DnaA. During DNA replication from the origin of replication (oriC) in the DNA replisome, DnaD is required after DnaA, before DnaB and subsequent helicase DnaC loading. A component of the replication restart primosome, which reloads the replicative helicase on sites other than oriC. DnaB, DnaD and DnaI may also be required for a PriA-independent pathway of replication fork restart. DnaB and DnaD work together to allow DnaB access to single-stranded (ss)DNA. Has DNA remodeling activity that converts supercoiled plasmid into an open circular form; DnaD forms scaffolds inside the plasmid DNA. Plasmid relaxation incorporates both wrapping around the DnaD protein scaffold and simultaneous untwisting, no nicking of the DNA is seen. Also converts linear DNA into an open circular form. Disrupts a replicative helicase-DnaI complex. Inhibits the ability of DnaA-ATP to form a helix on DNA; does not disassemble preformed helices in vitro. Binds ssDNA, and replication fork-like substrates, supercoiled plasmid, but not stably to short double-stranded (ds)DNA. DnaD stimulates DnaB DNA-binding activities. DnaB and DnaD are required to load helicase on the repN plasmid origin of replication (oriN). Causes a severe growth defect upon overexpression even in an oriC-independent strain. This Bacillus subtilis (strain 168) protein is Replicative helicase loading/DNA remodeling protein DnaD.